Consider the following 466-residue polypeptide: Integrator complex subunit 12 (466 aa).

Residues 41–101 form a disordered region; it reads KGNDSVYRPQ…EAEKRSADKM (61 aa). The span at 69 to 84 shows a compositional bias: low complexity; the sequence is KASSSTPSSSMLSKPL. A compositionally biased stretch (basic and acidic residues) spans 85–101; the sequence is TSEKLKKEAEKRSADKM. Residues 156–212 form a PHD-type zinc finger; sequence GLACVVCRQMTVFSGNQLVECQECHNLYHQDCHKPQVTDKDVNDPRLVWYCARCTRQ. Disordered regions lie at residues 216 to 251 and 311 to 466; these read MAQKNQKPSQKPSPSAVSAVTPVAKDPSVNKPELKA and GTSS…KLKK. Polar residues-rich tracts occupy residues 218–233 and 311–329; these read QKNQKPSQKPSPSAVS and GTSSQATSGKPPSLSSVQK. Low complexity predominate over residues 338–373; the sequence is PSKPGSVSKSGSGGSSSSSTIPIKPLPPLILGKTGL. Over residues 374 to 386 the composition is skewed to polar residues; that stretch reads SRSMSSDNVSKTG. Low complexity predominate over residues 392 to 423; it reads PSSAGSVSSLSSQLGSNNGSSSAAGSNVTSSN. The span at 453–466 shows a compositional bias: basic residues; it reads QMVKKKAAQKKLKK.

Belongs to the Integrator subunit 12 family. Component of the Integrator complex, composed of core subunits INTS1, INTS2, INTS3, INTS4, INTS5, INTS6, INTS7, INTS8, INTS9/RC74, INTS10, INTS11/CPSF3L, INTS12, INTS13, INTS14 and INTS15. The core complex associates with protein phosphatase 2A subunits PPP2CA and PPP2R1A, to form the Integrator-PP2A (INTAC) complex.

It localises to the nucleus. Its function is as follows. Component of the integrator complex, a multiprotein complex that terminates RNA polymerase II (Pol II) transcription in the promoter-proximal region of genes. The integrator complex provides a quality checkpoint during transcription elongation by driving premature transcription termination of transcripts that are unfavorably configured for transcriptional elongation: the complex terminates transcription by (1) catalyzing dephosphorylation of the C-terminal domain (CTD) of Pol II subunit POLR2A/RPB1 and SUPT5H/SPT5, (2) degrading the exiting nascent RNA transcript via endonuclease activity and (3) promoting the release of Pol II from bound DNA. The integrator complex is also involved in terminating the synthesis of non-coding Pol II transcripts, such as enhancer RNAs (eRNAs), small nuclear RNAs (snRNAs), telomerase RNAs and long non-coding RNAs (lncRNAs). The chain is Integrator complex subunit 12 (ints12) from Xenopus tropicalis (Western clawed frog).